A 315-amino-acid chain; its full sequence is Ribosomal RNA small subunit methyltransferase H (315 aa).

S-adenosyl-L-methionine is bound by residues 35–37, D55, F80, D102, and Q109; that span reads GGH.

Belongs to the methyltransferase superfamily. RsmH family.

The protein resides in the cytoplasm. It carries out the reaction cytidine(1402) in 16S rRNA + S-adenosyl-L-methionine = N(4)-methylcytidine(1402) in 16S rRNA + S-adenosyl-L-homocysteine + H(+). In terms of biological role, specifically methylates the N4 position of cytidine in position 1402 (C1402) of 16S rRNA. The sequence is that of Ribosomal RNA small subunit methyltransferase H from Shewanella pealeana (strain ATCC 700345 / ANG-SQ1).